An 878-amino-acid chain; its full sequence is MEMPKDYNIEIEKQIQKKWEESKIYKFDEESNKPPYIIDTPPPYPTGRLHLGHALNWTYMDIIARYKRMKGFNVLFPQGWDCHGLPTEVKVEEIHGITKSDVDRHKFRELCIELTKENIEKMRRQIKSLGISIDWDKEYITMTPEYIKKSQTAFVRMYKDGLIYRGKFPVNWCPRCQTAIAFAEVEYKERESKLNYIKFPAADGEGHLLIATTRPELMAACVAILVHPEDERYKHLIGKEFIVPLFGHKVKLLADEDVEKEFGTGAVMVCTFGDKTDVLWVNRHKLEIKKAIDEKGELTEIAGKYKGLKTEEAREKIIEDLKKEGYLVKQEPIKQNVGVCWRCKTPIEIIVTEQWFVNVRKLIPKVREVADEIKWIPEHMKIRLLNWIEDMDWDWVISRQRIFATPIPVWYCPKCGNVVVAKEEDLPIDPTKTGYVCDKCGNKDLIPETDVLDTWMDSSITPMVITKWLDDDKFFEKHYPVQLRPQGHDIIRTWAFYTIVKSVALTGKKPWDEIVINGMVFGEDGHKMSKSRGNVVEPDEIIAKYGADALRLWASNSVVGDDVQFLWKEVDYGYRFLRKSWNACRFAKMHISDDIIDELKKPMEISNPIDLWILSKLQRLIERVDKDLENYRFNTIVEIYKFVWHEFCDNYIEMVKYRLYGDDEEAKKEARWTLYYVIDKVVRLLCPFAPHFSDYIAEIYKIDNLHFSFPEVDNRFINEEAEKFGEIAKNTVISIRRFKANSGMALNAPLKYVEIYTEDEETYLALNKTAEDIKGTLKIEELKIIKGKPALESKIVEIIPDKSKIGPEFKKNAKAVMDLIKNADEETLEKIINEGLETEYGVIRKEHIKDVKRALFCEGEEVDSVDIEGVLAMAIIRK.

The 'HIGH' region motif lies at 43–53 (PYPTGRLHLGH). Positions 527 to 531 (KMSKS) match the 'KMSKS' region motif. Residue Lys-530 coordinates ATP.

It belongs to the class-I aminoacyl-tRNA synthetase family. ValS type 2 subfamily.

It localises to the cytoplasm. It catalyses the reaction tRNA(Val) + L-valine + ATP = L-valyl-tRNA(Val) + AMP + diphosphate. Catalyzes the attachment of valine to tRNA(Val). As ValRS can inadvertently accommodate and process structurally similar amino acids such as threonine, to avoid such errors, it has a 'posttransfer' editing activity that hydrolyzes mischarged Thr-tRNA(Val) in a tRNA-dependent manner. The polypeptide is Valine--tRNA ligase (Methanocaldococcus jannaschii (strain ATCC 43067 / DSM 2661 / JAL-1 / JCM 10045 / NBRC 100440) (Methanococcus jannaschii)).